The primary structure comprises 901 residues: HTH-type transcriptional regulator MalT (901 aa).

39 to 46 lines the ATP pocket; sequence SPAGYGKT. An HTH luxR-type domain is found at 829-894; it reads ELIRTSPLTQ…DAVQHAQQLL (66 aa). The H-T-H motif DNA-binding region spans 853–872; it reads NEQIAGELEVAATTIKTHIR.

This sequence belongs to the MalT family. In terms of assembly, monomer in solution. Oligomerizes to an active state in the presence of the positive effectors ATP and maltotriose.

Its activity is regulated as follows. Activated by ATP and maltotriose, which are both required for DNA binding. Positively regulates the transcription of the maltose regulon whose gene products are responsible for uptake and catabolism of malto-oligosaccharides. Specifically binds to the promoter region of its target genes, recognizing a short DNA motif called the MalT box. The sequence is that of HTH-type transcriptional regulator MalT from Escherichia coli (strain ATCC 8739 / DSM 1576 / NBRC 3972 / NCIMB 8545 / WDCM 00012 / Crooks).